Reading from the N-terminus, the 156-residue chain is Small ribosomal subunit protein uS7 (156 aa).

It belongs to the universal ribosomal protein uS7 family. In terms of assembly, part of the 30S ribosomal subunit. Contacts proteins S9 and S11.

In terms of biological role, one of the primary rRNA binding proteins, it binds directly to 16S rRNA where it nucleates assembly of the head domain of the 30S subunit. Is located at the subunit interface close to the decoding center, probably blocks exit of the E-site tRNA. This is Small ribosomal subunit protein uS7 from Prochlorococcus marinus subsp. pastoris (strain CCMP1986 / NIES-2087 / MED4).